A 258-amino-acid polypeptide reads, in one-letter code: UPF0246 protein YaaA (258 aa).

This sequence belongs to the UPF0246 family.

The sequence is that of UPF0246 protein YaaA from Shigella dysenteriae serotype 1 (strain Sd197).